The following is a 487-amino-acid chain: ATP-dependent RNA helicase DBP3 (487 aa).

Positions 1–40 (MAKRSRNMESNSERSSRPKKKSKGDAKPEQPPYVQSAELD) are disordered. The short motif at 71 to 98 (TAFSYLPSDSNQLYGPLEHFSKPTPIQS) is the Q motif element. The 176-residue stretch at 101-276 (WPYLFAGRDV…TTFMKEPVTV (176 aa)) folds into the Helicase ATP-binding domain. 114–121 (AETGSGKT) is an ATP binding site. A DEAD box motif is present at residues 222–225 (DEAD). The region spanning 291 to 456 (RIKQIVEVVK…DIPEALLKFG (166 aa)) is the Helicase C-terminal domain.

It belongs to the DEAD box helicase family. DDX5/DBP2 subfamily.

The protein resides in the nucleus. It is found in the nucleolus. The catalysed reaction is ATP + H2O = ADP + phosphate + H(+). Functionally, ATP-dependent RNA helicase required for 60S ribosomal subunit synthesis. Involved in efficient pre-rRNA processing, predominantly at site A3, which is necessary for the normal formation of 25S and 5.8S rRNAs. The sequence is that of ATP-dependent RNA helicase DBP3 (DBP3) from Ajellomyces capsulatus (strain NAm1 / WU24) (Darling's disease fungus).